Consider the following 353-residue polypeptide: UDP-N-acetylglucosamine--N-acetylmuramyl-(pentapeptide) pyrophosphoryl-undecaprenol N-acetylglucosamine transferase (353 aa).

UDP-N-acetyl-alpha-D-glucosamine-binding positions include 10–12 (TGG), Asn124, Ser183, and Gln283.

The protein belongs to the glycosyltransferase 28 family. MurG subfamily.

The protein localises to the cell inner membrane. It carries out the reaction di-trans,octa-cis-undecaprenyl diphospho-N-acetyl-alpha-D-muramoyl-L-alanyl-D-glutamyl-meso-2,6-diaminopimeloyl-D-alanyl-D-alanine + UDP-N-acetyl-alpha-D-glucosamine = di-trans,octa-cis-undecaprenyl diphospho-[N-acetyl-alpha-D-glucosaminyl-(1-&gt;4)]-N-acetyl-alpha-D-muramoyl-L-alanyl-D-glutamyl-meso-2,6-diaminopimeloyl-D-alanyl-D-alanine + UDP + H(+). It functions in the pathway cell wall biogenesis; peptidoglycan biosynthesis. In terms of biological role, cell wall formation. Catalyzes the transfer of a GlcNAc subunit on undecaprenyl-pyrophosphoryl-MurNAc-pentapeptide (lipid intermediate I) to form undecaprenyl-pyrophosphoryl-MurNAc-(pentapeptide)GlcNAc (lipid intermediate II). The protein is UDP-N-acetylglucosamine--N-acetylmuramyl-(pentapeptide) pyrophosphoryl-undecaprenol N-acetylglucosamine transferase of Helicobacter pylori (strain P12).